A 598-amino-acid chain; its full sequence is mRNA-capping enzyme (598 aa).

Residues 1-215 form a TPase region; sequence MSQTGAPPRW…GSASAPASEP (215 aa). A Tyrosine-protein phosphatase domain is found at 25–183; it reads LPMKTMLGPR…FRRYGDVEDA (159 aa). The Phosphocysteine intermediate role is filled by Cys-126. The disordered stretch occupies residues 186–227; sequence APPLPEWCFDEDEEEDGEEDGSASAPASEPSSSHTGQSKKKK. Over residues 193–206 the composition is skewed to acidic residues; the sequence is CFDEDEEEDGEEDG. Low complexity predominate over residues 207–218; sequence SASAPASEPSSS. A GTase region spans residues 233–598; the sequence is GAVFLEGVSV…PKRSANSIPQ (366 aa). Lys-298 (N6-GMP-lysine intermediate) is an active-site residue. Residues Arg-303, Arg-319, 347-349, 462-464, and 532-537 each bind GTP; these read DGE, KWK, and RQRVDK. The disordered stretch occupies residues 575-598; sequence RKNPADSDLMPPPPPKRSANSIPQ.

It in the N-terminal section; belongs to the non-receptor class of the protein-tyrosine phosphatase family. In the C-terminal section; belongs to the eukaryotic GTase family.

It localises to the nucleus. It carries out the reaction a 5'-end triphospho-ribonucleoside in mRNA + H2O = a 5'-end diphospho-ribonucleoside in mRNA + phosphate + H(+). The catalysed reaction is a 5'-end diphospho-ribonucleoside in mRNA + GTP + H(+) = a 5'-end (5'-triphosphoguanosine)-ribonucleoside in mRNA + diphosphate. Bifunctional mRNA-capping enzyme exhibiting RNA 5'-triphosphate monophosphatase activity in the N-terminal part and mRNA guanylyltransferase activity in the C-terminal part. Catalyzes the first two steps of cap formation: by removing the gamma-phosphate from the 5'-triphosphate end of nascent mRNA to yield a diphosphate end, and by transferring the GMP moiety of GTP to the 5'-diphosphate terminus of RNA via a covalent enzyme-GMP reaction intermediate. This Danio rerio (Zebrafish) protein is mRNA-capping enzyme (rngtt).